The sequence spans 197 residues: MKVLQEKILNEGKVLSGDVLKVDAFLNHQIDPVLMQEIGKEFAKRFKEENITKIVTIESSGIAPAVMAALELGVKVIFARKRKSLTLQDNMYVANVYSFTKQETNEISLSRNHIDENDRVLIIDDFLANGQAALGLMSLVEQAGASIAGIGIVIEKAFQDGGKKLREQGVRVESLAEIASLDNGTVAFVQHETAEVK.

Residues Leu-20 and Asn-27 each contribute to the xanthine site. 5-phospho-alpha-D-ribose 1-diphosphate is bound at residue 128 to 132; that stretch reads ANGQA. A xanthine-binding site is contributed by Lys-156.

It belongs to the purine/pyrimidine phosphoribosyltransferase family. Xpt subfamily. As to quaternary structure, homodimer.

The protein resides in the cytoplasm. The enzyme catalyses XMP + diphosphate = xanthine + 5-phospho-alpha-D-ribose 1-diphosphate. The protein operates within purine metabolism; XMP biosynthesis via salvage pathway; XMP from xanthine: step 1/1. Functionally, converts the preformed base xanthine, a product of nucleic acid breakdown, to xanthosine 5'-monophosphate (XMP), so it can be reused for RNA or DNA synthesis. This chain is Xanthine phosphoribosyltransferase, found in Bacillus cereus (strain G9842).